The primary structure comprises 496 residues: DNA-directed DNA/RNA polymerase mu (496 aa).

The disordered stretch occupies residues 1–22 (MLPKRRRVRAGSPHSAVASSTP). Residue Ser-12 is modified to Phosphoserine. Low complexity predominate over residues 12–22 (SPHSAVASSTP). The BRCT domain occupies 23–122 (PSVVRFPDVA…QPVPEEGRHH (100 aa)). Thr-241 and Val-243 together coordinate Na(+). Residues 323 to 332 (RGKLQGHDVD) are involved in ssDNA binding. Positions 330, 332, and 420 each coordinate Mg(2+).

It belongs to the DNA polymerase type-X family. Mg(2+) is required as a cofactor.

Its subcellular location is the nucleus. It catalyses the reaction DNA(n) + a 2'-deoxyribonucleoside 5'-triphosphate = DNA(n+1) + diphosphate. Its function is as follows. Gap-filling polymerase involved in repair of DNA double-strand breaks by non-homologous end joining (NHEJ). Participates in immunoglobulin (Ig) light chain gene rearrangement in V(D)J recombination. This Mus musculus (Mouse) protein is DNA-directed DNA/RNA polymerase mu (Polm).